A 166-amino-acid chain; its full sequence is Protein-export protein SecB (166 aa).

This sequence belongs to the SecB family. In terms of assembly, homotetramer, a dimer of dimers. One homotetramer interacts with 1 SecA dimer.

It is found in the cytoplasm. Its function is as follows. One of the proteins required for the normal export of preproteins out of the cell cytoplasm. It is a molecular chaperone that binds to a subset of precursor proteins, maintaining them in a translocation-competent state. It also specifically binds to its receptor SecA. This Actinobacillus succinogenes (strain ATCC 55618 / DSM 22257 / CCUG 43843 / 130Z) protein is Protein-export protein SecB.